Consider the following 339-residue polypeptide: Glyoxylate reductase (339 aa).

NADP(+)-binding positions include 157–160 and 239–241; these read LGRI and TAR. Active-site residues include Arg241 and Glu270. The active-site Proton donor is His289. Position 289–291 (289–291) interacts with NADP(+); the sequence is HIA.

It belongs to the D-isomer specific 2-hydroxyacid dehydrogenase family. GyaR subfamily. Homodimer.

It localises to the cytoplasm. It carries out the reaction glycolate + NAD(+) = glyoxylate + NADH + H(+). The sequence is that of Glyoxylate reductase from Thermofilum pendens (strain DSM 2475 / Hrk 5).